Consider the following 505-residue polypeptide: Probable folylpolyglutamate synthase (505 aa).

Residue 89–92 (GKGS) participates in ATP binding. Mg(2+)-binding residues include Ser121, Glu190, and His218. The ATP site is built by Arg332 and Asp346.

The protein belongs to the folylpolyglutamate synthase family. A monovalent cation is required as a cofactor.

It is found in the mitochondrion inner membrane. The protein resides in the mitochondrion matrix. Its subcellular location is the cytoplasm. The enzyme catalyses (6S)-5,6,7,8-tetrahydrofolyl-(gamma-L-Glu)(n) + L-glutamate + ATP = (6S)-5,6,7,8-tetrahydrofolyl-(gamma-L-Glu)(n+1) + ADP + phosphate + H(+). The protein operates within cofactor biosynthesis; tetrahydrofolylpolyglutamate biosynthesis. In terms of biological role, catalyzes conversion of folates to polyglutamate derivatives allowing concentration of folate compounds in the cell and the intracellular retention of these cofactors, which are important substrates for most of the folate-dependent enzymes that are involved in one-carbon transfer reactions involved in purine, pyrimidine and amino acid synthesis. The chain is Probable folylpolyglutamate synthase (met7) from Schizosaccharomyces pombe (strain 972 / ATCC 24843) (Fission yeast).